A 235-amino-acid chain; its full sequence is MIPWLSPYSLEFPDVRLALDEPNGLLALGGDLSPERLVSAYQRGIFPWFNPGDPILWWSPHPRTVVFPHQHHVSRSLRKTLRKGIYRVTFDHCFAQVMRACAAPRAYANGTWISEQMISSYTRLHEQGYAHSVEVWQDENLVGGLYGLSLGKIFFGESMFSRADNASKTGFAYLVRQLQQWDFRLIDCQVASDHLFTLGAVEISRDEFQKMLVHFTEQPRDYPLHWHEIDPETRW.

Belongs to the L/F-transferase family.

Its subcellular location is the cytoplasm. The catalysed reaction is N-terminal L-lysyl-[protein] + L-leucyl-tRNA(Leu) = N-terminal L-leucyl-L-lysyl-[protein] + tRNA(Leu) + H(+). It catalyses the reaction N-terminal L-arginyl-[protein] + L-leucyl-tRNA(Leu) = N-terminal L-leucyl-L-arginyl-[protein] + tRNA(Leu) + H(+). It carries out the reaction L-phenylalanyl-tRNA(Phe) + an N-terminal L-alpha-aminoacyl-[protein] = an N-terminal L-phenylalanyl-L-alpha-aminoacyl-[protein] + tRNA(Phe). Functionally, functions in the N-end rule pathway of protein degradation where it conjugates Leu, Phe and, less efficiently, Met from aminoacyl-tRNAs to the N-termini of proteins containing an N-terminal arginine or lysine. This chain is Leucyl/phenylalanyl-tRNA--protein transferase, found in Cellvibrio japonicus (strain Ueda107) (Pseudomonas fluorescens subsp. cellulosa).